The primary structure comprises 248 residues: Putative TrmH family tRNA/rRNA methyltransferase (248 aa).

S-adenosyl-L-methionine is bound by residues glycine 196, isoleucine 216, and leucine 225.

It belongs to the class IV-like SAM-binding methyltransferase superfamily. RNA methyltransferase TrmH family.

In Staphylococcus aureus (strain COL), this protein is Putative TrmH family tRNA/rRNA methyltransferase.